Reading from the N-terminus, the 245-residue chain is 1-(5-phosphoribosyl)-5-[(5-phosphoribosylamino)methylideneamino] imidazole-4-carboxamide isomerase (245 aa).

The active-site Proton acceptor is Asp7. Catalysis depends on Asp129, which acts as the Proton donor.

It belongs to the HisA/HisF family.

The protein localises to the cytoplasm. It carries out the reaction 1-(5-phospho-beta-D-ribosyl)-5-[(5-phospho-beta-D-ribosylamino)methylideneamino]imidazole-4-carboxamide = 5-[(5-phospho-1-deoxy-D-ribulos-1-ylimino)methylamino]-1-(5-phospho-beta-D-ribosyl)imidazole-4-carboxamide. Its pathway is amino-acid biosynthesis; L-histidine biosynthesis; L-histidine from 5-phospho-alpha-D-ribose 1-diphosphate: step 4/9. The chain is 1-(5-phosphoribosyl)-5-[(5-phosphoribosylamino)methylideneamino] imidazole-4-carboxamide isomerase from Cronobacter sakazakii (strain ATCC BAA-894) (Enterobacter sakazakii).